The primary structure comprises 658 residues: Pentatricopeptide repeat-containing protein 7, mitochondrial (658 aa).

A mitochondrion-targeting transit peptide spans 1-29; it reads MRNCVSPLLFAWTKHLRLREFKIPFPNRL. 2 PPR repeats span residues 130-164 and 220-254; these read VKKRFAECFDKNPDLCLIVYSKLEVETLAKITPIW and LYVELCLVYHFHNSHLGMDSSTVSNLKRFCFSESL.

The protein localises to the mitochondrion. In terms of biological role, mitochondrial RNA-binding protein required for the stability of the atp6 mRNA. This chain is Pentatricopeptide repeat-containing protein 7, mitochondrial (ppr7), found in Schizosaccharomyces pombe (strain 972 / ATCC 24843) (Fission yeast).